The chain runs to 588 residues: Complement component C8 beta chain (588 aa).

The first 30 residues, 1 to 30, serve as a signal peptide directing secretion; that stretch reads MFRVAIPRSALNLHSCLLHVTLSLVLISKA. A propeptide spanning residues 31-46 is cleaved from the precursor; it reads AITTAGNEDSDVREAR. One can recognise a TSP type-1 1 domain in the interval 58 to 113; it reads DCVISDWSAWSRCDTCQKKRYRYAKLDQPSQFGGEPCHFHDMEDEACDVPDRYTCD. Intrachain disulfides connect C59/C94, C70/C104, C73/C112, C118/C129, C123/C142, C136/C151, and C158/C196. C-linked (Man) tryptophan glycans are attached at residues W64 and W67. Residues 115-152 form the LDL-receptor class A domain; sequence IPLCEGFLCTQTGRCIHRTLQCNGEDDCGDMSDEVGCK. 6 residues coordinate Ca(2+): L134, N137, E139, D141, D147, and E148. Positions 154–500 constitute an MACPF domain; that stretch reads VPKPCRQEAE…EYLAESSSCR (347 aa). Beta stranded transmembrane passes span 248–255, 258–265, 375–382, and 388–395; these read TIVSIGFA, GIAEFGFN, TQAGLKIG, and VYVSAGIE. Cystine bridges form between C374–C399, C499–C547, C501–C517, C504–C519, and C521–C530. Residues 501–531 form the EGF-like domain; it reads CAPCHNNGVAVLRGTRCDCVCPTGYTGRGCE. The 47-residue stretch at 542–588 folds into the TSP type-1 2 domain; the sequence is DGSWSCWGAWSSCSGRKMSRSRQCNNPVPSDGGLACRGLQQESTDCF. Residues W548 and W551 are each glycosylated (C-linked (Man) tryptophan). C554 and C587 are disulfide-bonded.

This sequence belongs to the complement C6/C7/C8/C9 family. Heterotrimer of 3 chains: alpha (C8A), beta (C8B) and gamma (C8G); the alpha and gamma chains are disulfide bonded. Component of the membrane attack complex (MAC), composed of complement C5b, C6, C7, C8A, C8B, C8G and multiple copies of the pore-forming subunit C9.

Its subcellular location is the secreted. The protein resides in the target cell membrane. In terms of biological role, component of the membrane attack complex (MAC), a multiprotein complex activated by the complement cascade, which inserts into a target cell membrane and forms a pore, leading to target cell membrane rupture and cell lysis. The MAC is initiated by proteolytic cleavage of C5 into complement C5b in response to the classical, alternative, lectin and GZMK complement pathways. The complement pathways consist in a cascade of proteins that leads to phagocytosis and breakdown of pathogens and signaling that strengthens the adaptive immune system. C8B, together with C8A and C8G, inserts into the target membrane, but does not form pores by itself. During MAC assembly, associates with C5b, C6 and C7 to form the C5b8 intermediate complex that inserts into the target membrane and traverses the bilayer increasing membrane rigidity. This chain is Complement component C8 beta chain (c8b), found in Paralichthys olivaceus (Bastard halibut).